A 174-amino-acid polypeptide reads, in one-letter code: Protein TM_1551 (174 aa).

The AMMECR1 domain maps to 2–174; that stretch reads IGEHPYVKWA…IYRFTVERYK (173 aa).

This Thermotoga maritima (strain ATCC 43589 / DSM 3109 / JCM 10099 / NBRC 100826 / MSB8) protein is Protein TM_1551.